The following is a 339-amino-acid chain: Putative P2Y purinoceptor 10 (339 aa).

At methionine 1–threonine 39 the chain is on the extracellular side. Residues asparagine 16 and asparagine 26 are each glycosylated (N-linked (GlcNAc...) asparagine). A helical transmembrane segment spans residues threonine 40–cysteine 60. The Cytoplasmic segment spans residues arginine 61–lysine 68. Residues alanine 69–leucine 89 form a helical membrane-spanning segment. Topologically, residues arginine 90–arginine 103 are extracellular. The helical transmembrane segment at alanine 104–leucine 124 threads the bilayer. Cysteines 106 and 181 form a disulfide. The Cytoplasmic portion of the chain corresponds to threonine 125–aspartate 149. A helical transmembrane segment spans residues valine 150–leucine 170. The Extracellular segment spans residues arginine 171–valine 193. An N-linked (GlcNAc...) asparagine glycan is attached at asparagine 178. A helical transmembrane segment spans residues alanine 194–isoleucine 214. The Cytoplasmic portion of the chain corresponds to alanine 215 to methionine 244. A helical transmembrane segment spans residues valine 245–phenylalanine 265. Residues tyrosine 266 to proline 288 lie on the Extracellular side of the membrane. A helical transmembrane segment spans residues phenylalanine 289–alanine 309. Residues serine 310–glycine 339 lie on the Cytoplasmic side of the membrane.

This sequence belongs to the G-protein coupled receptor 1 family. Weakly expressed in blood leukocytes.

The protein localises to the cell membrane. Putative receptor for purines coupled to G-proteins. The chain is Putative P2Y purinoceptor 10 (P2RY10) from Homo sapiens (Human).